We begin with the raw amino-acid sequence, 373 residues long: Plasmepsin VIII (373 aa).

An N-terminal signal peptide occupies residues 1-21 (MNKFFVFPLLLILNSIVLVKS). The Peptidase A1 domain maps to 50 to 370 (FIGEISIGNP…EKDNMRIGLA (321 aa)). Active-site residues include aspartate 68 and aspartate 258.

The protein belongs to the peptidase A1 family.

In terms of biological role, during the development in the mosquito vector, plays an essential role in sporozoite egress from the oocyst and sporozoite gliding motility, which is required for the invasion of salivary glands and subsequent transmission to the host. This is Plasmepsin VIII from Plasmodium berghei (strain Anka).